The primary structure comprises 753 residues: MPILTCRYKILFLYNLRNCFTFQNQRCLIPYGTTTTIRWYNANFQAVQNNFSDYKNELISSHRPEASSLLDFLVKDQKKSGDISLHTKFNLYVDDLLKKSEKGQIKKFINDIKKDLATESQLPLSAPFKDESTRTMTDPQVLAYIHQSMPYQYASLYSVLTDLKIVNSDVSCKSQHILDCGKGPGIGALASYSVFPTPNSVSIVEENPFLKKIIYDIHHNIYPSTSPNPTSPVTLNRLPLGKKDSYTLVIASNKLLEMKSEKELFDYLRSLWSLVSNDGGLLVLCERGTKRGFSLIQRARTFLLQKSKNTSDKQFNAHIVAPCPHDGRCPIDIENGVRANICSFKQHFFLSPFSRLYVPRSHRRSSDRSHYSYVVIQKGITRPLNNTTQRFKNDEDLLENVNVTSPTLKNWPRIIRPPLKRDGHVIIDVCDSDARLRRNIVPKSQGKLAYRLARKSAWGDLFPLEGKVQSTSPSSKITKHLKDASSTYSINPPSYNKPKVERNTTADPIFVGKRFYSTNRHKAFSRFADFNSHRFPCIFTSFSCYNCISGTRKYSRQYSRDKFHYNQRTTIYYLVAISIFALGLTYAAVPLYRLFCSKTGYGGTLNTDQSRMNAERMVPRKDNKRIRVTFNGDVAGNLSWKLWPQQREIYVLPGETALGFYTAENTSDHDIVGVATYNIVPGQAAVYFSKVACFCFEEQKLDAHEKVDLPVFFFIDPEFADDPNMKDIDDILLSYTFFEARYDTNGNLLTKLN.

The transit peptide at 1–39 (MPILTCRYKILFLYNLRNCFTFQNQRCLIPYGTTTTIRW) directs the protein to the mitochondrion. Positions 323, 329, 342, and 430 each coordinate [4Fe-4S] cluster. Residues 571–591 (IYYLVAISIFALGLTYAAVPL) form a helical membrane-spanning segment. Over 592–753 (YRLFCSKTGY…TNGNLLTKLN (162 aa)) the chain is Mitochondrial intermembrane.

It in the N-terminal section; belongs to the methyltransferase superfamily. Rsm22 family. The protein in the C-terminal section; belongs to the COX11/CtaG family. In terms of assembly, associates with the mitochondrial ribosome (mitoribosome). Only transiently interacts with the mitoribosome. In terms of processing, specific enzymatic cleavages in vivo by mitochondrial processing peptidase (MPP) yield mature proteins including rsm22-1 and cox11-1.

The protein resides in the mitochondrion. It is found in the mitochondrion inner membrane. In terms of biological role, mitochondrial ribosome (mitoribosome) assembly factor. Binds at the interface of the head and body domains of the mitochondrial small ribosomal subunit (mt-SSU), occluding the mRNA channel and preventing compaction of the head domain towards the body. Probable inactive methyltransferase: retains the characteristic folding and ability to bind S-adenosyl-L-methionine, but it probably lost its methyltransferase activity. Exerts its effect at some terminal stage of cytochrome c oxidase synthesis, probably by being involved in the insertion of the copper B into subunit I. The sequence is that of Rsm22-cox11 tandem protein 1, mitochondrial (cox1101) from Schizosaccharomyces pombe (strain 972 / ATCC 24843) (Fission yeast).